Reading from the N-terminus, the 316-residue chain is Acetyl-coenzyme A carboxylase carboxyl transferase subunit alpha (316 aa).

The CoA carboxyltransferase C-terminal domain maps to 40-293 (LERRSKDALR…GETIENGFRE (254 aa)).

It belongs to the AccA family. Acetyl-CoA carboxylase is a heterohexamer composed of biotin carboxyl carrier protein (AccB), biotin carboxylase (AccC) and two subunits each of ACCase subunit alpha (AccA) and ACCase subunit beta (AccD).

It is found in the cytoplasm. It carries out the reaction N(6)-carboxybiotinyl-L-lysyl-[protein] + acetyl-CoA = N(6)-biotinyl-L-lysyl-[protein] + malonyl-CoA. It functions in the pathway lipid metabolism; malonyl-CoA biosynthesis; malonyl-CoA from acetyl-CoA: step 1/1. Component of the acetyl coenzyme A carboxylase (ACC) complex. First, biotin carboxylase catalyzes the carboxylation of biotin on its carrier protein (BCCP) and then the CO(2) group is transferred by the carboxyltransferase to acetyl-CoA to form malonyl-CoA. The polypeptide is Acetyl-coenzyme A carboxylase carboxyl transferase subunit alpha (Chelativorans sp. (strain BNC1)).